Reading from the N-terminus, the 452-residue chain is MQRRIMGIETEFGVTCTFHGHRRLSPDEVARYLFRRVVSWGRSSNVFLRNGARLYLDVGSHPEYATAECDNLIQLVNHDRAGERVLEELLIDAEQRLAEEGIGGDIYLFKNNTDSAGNSYGCHENFLVARAGEFSRISDVLLPFLVTRQLICGAGKVLQTPKAATFCLSQRAEHIWEGVSSATTRSRPIINTRDEPHADAEKYRRLHVIVGDSNMSESTTMLKVGTAALVLEMIEAGVSFRDFALDNPIRAIREVSHDVTGRRPVRLAGGRQASALDIQREYHARAVEHLQNREPDPQVTQVVELWGRMLDAVETQDFAKVDTEIDWVIKRKLFQRYQDRHGFELADPKIAQLDLAYHDIKRGRGVFDVLQRKGLVKRITEDETIEAAVDTPPQTTRAKLRGEFITAAQEAGRDFTVDWVHLKLNDQAQRTVLCKDPFRSVDERVERLIASM.

Glu9 is a Mg(2+) binding site. Arg53 lines the ATP pocket. A Mg(2+)-binding site is contributed by Tyr55. Asp57 serves as the catalytic Proton acceptor. Residue Glu63 participates in Mg(2+) binding. The ATP site is built by Thr66 and Trp419.

Belongs to the Pup ligase/Pup deamidase family. Pup-conjugating enzyme subfamily.

It carries out the reaction ATP + [prokaryotic ubiquitin-like protein]-L-glutamate + [protein]-L-lysine = ADP + phosphate + N(6)-([prokaryotic ubiquitin-like protein]-gamma-L-glutamyl)-[protein]-L-lysine.. The protein operates within protein degradation; proteasomal Pup-dependent pathway. It participates in protein modification; protein pupylation. Its function is as follows. Catalyzes the covalent attachment of the prokaryotic ubiquitin-like protein modifier Pup to the proteasomal substrate proteins, thereby targeting them for proteasomal degradation. This tagging system is termed pupylation. The ligation reaction involves the side-chain carboxylate of the C-terminal glutamate of Pup and the side-chain amino group of a substrate lysine. The chain is Pup--protein ligase 1 from Rhodococcus erythropolis (Arthrobacter picolinophilus).